The chain runs to 238 residues: Small ribosomal subunit protein uS3 (238 aa).

One can recognise a KH type-2 domain in the interval 39-107 (MREFIHDYAK…ELHLNIVEIR (69 aa)). Basic and acidic residues predominate over residues 212–222 (PQAHDRRHSEA). The disordered stretch occupies residues 212–238 (PQAHDRRHSEAQEGAAPRPPRRDRERA).

Belongs to the universal ribosomal protein uS3 family. As to quaternary structure, part of the 30S ribosomal subunit. Forms a tight complex with proteins S10 and S14.

Functionally, binds the lower part of the 30S subunit head. Binds mRNA in the 70S ribosome, positioning it for translation. The polypeptide is Small ribosomal subunit protein uS3 (Cereibacter sphaeroides (strain ATCC 17025 / ATH 2.4.3) (Rhodobacter sphaeroides)).